Here is a 300-residue protein sequence, read N- to C-terminus: Probable endonuclease 4 (300 aa).

Zn(2+)-binding residues include H68, H109, E144, D178, H181, H213, D226, H228, and E258.

It belongs to the AP endonuclease 2 family. The cofactor is Zn(2+).

It catalyses the reaction Endonucleolytic cleavage to 5'-phosphooligonucleotide end-products.. Endonuclease IV plays a role in DNA repair. It cleaves phosphodiester bonds at apurinic or apyrimidinic (AP) sites, generating a 3'-hydroxyl group and a 5'-terminal sugar phosphate. The polypeptide is Probable endonuclease 4 (Latilactobacillus sakei subsp. sakei (strain 23K) (Lactobacillus sakei subsp. sakei)).